Consider the following 457-residue polypeptide: Adenylyltransferase and sulfurtransferase MOCS3 (457 aa).

The disordered stretch occupies residues Ala-40 to Thr-60. Residue Thr-63 is modified to Phosphothreonine. ATP is bound by residues Gly-102, Asp-123, Ser-130–Arg-134, Lys-147, and Asp-191–Asn-192. Zn(2+) is bound by residues Cys-233 and Cys-236. Cys-250 (glycyl thioester intermediate; for adenylyltransferase activity) is an active-site residue. Residues Cys-309 and Cys-312 each contribute to the Zn(2+) site. Residues Glu-358–Pro-455 enclose the Rhodanese domain. Cys-414 acts as the Cysteine persulfide intermediate; for sulfurtransferase activity in catalysis.

In the N-terminal section; belongs to the HesA/MoeB/ThiF family. UBA4 subfamily. The cofactor is Zn(2+).

Its subcellular location is the cytoplasm. The protein resides in the cytosol. It catalyses the reaction [molybdopterin-synthase sulfur-carrier protein]-C-terminal Gly-Gly + ATP + H(+) = [molybdopterin-synthase sulfur-carrier protein]-C-terminal Gly-Gly-AMP + diphosphate. The enzyme catalyses [molybdopterin-synthase sulfur-carrier protein]-C-terminal Gly-Gly-AMP + S-sulfanyl-L-cysteinyl-[cysteine desulfurase] + AH2 = [molybdopterin-synthase sulfur-carrier protein]-C-terminal-Gly-aminoethanethioate + L-cysteinyl-[cysteine desulfurase] + A + AMP + 2 H(+). It participates in tRNA modification; 5-methoxycarbonylmethyl-2-thiouridine-tRNA biosynthesis. Its pathway is cofactor biosynthesis; molybdopterin biosynthesis. Functionally, plays a central role in 2-thiolation of mcm(5)S(2)U at tRNA wobble positions of cytosolic tRNA(Lys), tRNA(Glu) and tRNA(Gln). Also essential during biosynthesis of the molybdenum cofactor. Acts by mediating the C-terminal thiocarboxylation of sulfur carriers URM1 and MOCS2A. Its N-terminus first activates URM1 and MOCS2A as acyl-adenylates (-COAMP), then the persulfide sulfur on the catalytic cysteine is transferred to URM1 and MOCS2A to form thiocarboxylation (-COSH) of their C-terminus. The reaction probably involves hydrogen sulfide that is generated from the persulfide intermediate and that acts as a nucleophile towards URM1 and MOCS2A. Subsequently, a transient disulfide bond is formed. Does not use thiosulfate as sulfur donor; NFS1 probably acting as a sulfur donor for thiocarboxylation reactions. The chain is Adenylyltransferase and sulfurtransferase MOCS3 from Drosophila willistoni (Fruit fly).